We begin with the raw amino-acid sequence, 418 residues long: Trans-acting enoyl reductase (418 aa).

This sequence belongs to the saccharopine dehydrogenase family. Enoyl reductase subfamily.

Its function is as follows. Involved in the reduction of the double bond between C-4 and C-5 during phthiocerol dimycocerosates (DIM A) and glycosylated phenolphthiocerol dimycocerosates (PGL) biosynthesis. In Mycobacterium ulcerans (strain Agy99), this protein is Trans-acting enoyl reductase.